The following is a 665-amino-acid chain: DNA mismatch repair protein MutL (665 aa).

Composition is skewed to polar residues over residues 348-361 (LEAT…NGLS) and 407-421 (PSSQ…NSRY). Disordered stretches follow at residues 348-370 (LEAT…AEEG) and 385-445 (VHRG…STSA). Over residues 426-445 (YSTNAASTNTASNYSHSTSA) the composition is skewed to low complexity.

It belongs to the DNA mismatch repair MutL/HexB family.

In terms of biological role, this protein is involved in the repair of mismatches in DNA. It is required for dam-dependent methyl-directed DNA mismatch repair. May act as a 'molecular matchmaker', a protein that promotes the formation of a stable complex between two or more DNA-binding proteins in an ATP-dependent manner without itself being part of a final effector complex. The chain is DNA mismatch repair protein MutL from Shewanella denitrificans (strain OS217 / ATCC BAA-1090 / DSM 15013).